The sequence spans 371 residues: MRVGIPTETKNNEFRVAITPAGVAELTRRGHEVLIQAGAGEGSAITDADFKAAGAQLVGTADQVWADADLLLKVKEPIAAEYGRLRHGQILFTFLHLAASRACTDALLDSGTTSIAYETVQTADGALPLLAPMSEVAGRLAAQVGAYHLMRTQGGRGVLMGGVPGVEPADVVVIGAGTAGYNAARIANGMGATVTVLDINIDKLRQLDAEFCGRIHTRYSSAYELEGAVKRADLVIGAVLVPGAKAPKLVSNSLVAHMKPGAVLVDIAIDQGGCFEGSRPTTYDHPTFAVHDTLFYCVANMPASVPKTSTYALTNATMPYVLELADHGWRAACRSNPALAKGLSTHEGALLSERVATDLGVPFTEPASVLA.

Substrate contacts are provided by R15 and K75. H96 (proton donor/acceptor) is an active-site residue. Residues S134, T178 to A179, D198, K203, S220, V239 to L240, I267 to D270, R279, and V298 to M301 contribute to the NAD(+) site. The Proton donor/acceptor role is filled by D270. Mg(2+) contacts are provided by E323 and H327.

It belongs to the AlaDH/PNT family. In terms of assembly, homohexamer. Trimer of dimers. Requires Mg(2+) as cofactor.

The protein localises to the secreted. The catalysed reaction is L-alanine + NAD(+) + H2O = pyruvate + NH4(+) + NADH + H(+). It participates in amino-acid degradation; L-alanine degradation via dehydrogenase pathway; NH(3) and pyruvate from L-alanine: step 1/1. Inhibited by CuSO(4) and ZnCl(2). Functionally, catalyzes the reversible reductive amination of pyruvate to L-alanine. However, since the physiological environment of M.tuberculosis has a neutral pH, it can be assumed that the enzyme catalyzes exclusively the formation of L-alanine. May play a role in cell wall synthesis as L-alanine is an important constituent of the peptidoglycan layer. This chain is Alanine dehydrogenase (ald), found in Mycobacterium tuberculosis (strain ATCC 25618 / H37Rv).